Here is a 168-residue protein sequence, read N- to C-terminus: Nuclear cap-binding protein subunit 2 (168 aa).

MRNA is bound by residues Tyr-23, Tyr-46, 115–119, 126–130, and 136–137; these read RTDWD, RQYGR, and QV. The 79-residue stretch at 43-121 folds into the RRM domain; it reads STLYVGNLSF…RIVRTDWDAG (79 aa).

The protein belongs to the RRM NCBP2 family. As to quaternary structure, component of the nuclear cap-binding complex (CBC), a heterodimer composed of NCBP1/CBP80 and NCBP2/CBP20 that interacts with m7GpppG-capped RNA.

The protein localises to the nucleus. It localises to the cytoplasm. Its function is as follows. Component of the cap-binding complex (CBC), which binds co-transcriptionally to the 5' cap of pre-mRNAs and is involved in various processes such as pre-mRNA splicing, translation regulation, nonsense-mediated mRNA decay, RNA-mediated gene silencing (RNAi) by microRNAs (miRNAs) and mRNA export. The CBC complex is involved in mRNA export from the nucleus, leading to the recruitment of the mRNA export machinery to the 5' end of mRNA and to mRNA export in a 5' to 3' direction through the nuclear pore. The CBC complex is also involved in mediating U snRNA and intronless mRNAs export from the nucleus. The CBC complex is essential for a pioneer round of mRNA translation, before steady state translation when the CBC complex is replaced by cytoplasmic cap-binding protein eIF4E. The pioneer round of mRNA translation mediated by the CBC complex plays a central role in nonsense-mediated mRNA decay (NMD), NMD only taking place in mRNAs bound to the CBC complex, but not on eIF4E-bound mRNAs. The CBC complex enhances NMD in mRNAs containing at least one exon-junction complex (EJC), promoting the interaction between UPF1 and UPF2. The CBC complex is also involved in 'failsafe' NMD, which is independent of the EJC complex, while it does not participate in Staufen-mediated mRNA decay (SMD). During cell proliferation, the CBC complex is also involved in microRNAs (miRNAs) biogenesis via its interaction with SRRT/ARS2, thereby being required for miRNA-mediated RNA interference. The CBC complex also acts as a negative regulator of PARN, thereby acting as an inhibitor of mRNA deadenylation. In the CBC complex, NCBP2/CBP20 recognizes and binds capped RNAs (m7GpppG-capped RNA) but requires NCBP1/CBP80 to stabilize the movement of its N-terminal loop and lock the CBC into a high affinity cap-binding state with the cap structure. The conventional cap-binding complex with NCBP2 binds both small nuclear RNA (snRNA) and messenger (mRNA) and is involved in their export from the nucleus. In Gallus gallus (Chicken), this protein is Nuclear cap-binding protein subunit 2 (NCBP2).